A 476-amino-acid chain; its full sequence is MARRLFLLLLAVTAGLSLTGTTVRAVGINWGTEASHPLPPSKVVELLKSNGIVKVKLFDADPKVLRALSGSNIGVTIGIQNSMLKSLNASVKVAESWVHDNVTRYFNGGNRVRIEYVAVGEEPFLQSYGNQYKPFVIGAAMNIQNALVKANLANEVKVVVPSSFDSFLSESGRPSSGHFRADLNKTMIELLSFLTKHHSPFFVTISPFLSFHQNKNISLDFSLFKETAKAHKDGRKTYRNSFDLSYDTLVSALFTIGFSEVDIVVSKIGWPTDGAENATSLTAEAFFKGLIVHLEKKTASLPRPPVETYIESLLDEDQRNLSAGNFERHWGVFTFDGQAKYNFSFNHKNQVNAQNVQYLPPKWCVVNNNKDLSNASARALEACAVADCTSILPGGSCSGIRWPGNVSYAFNSLYQQNDHSAESCNFGGLGLITTVDPSEDNCRFSIQLDTSHSSSQTPNFFQSWPLLLLFLLSGLF.

Residues 1 to 25 (MARRLFLLLLAVTAGLSLTGTTVRA) form the signal peptide. N-linked (GlcNAc...) asparagine glycans are attached at residues asparagine 88 and asparagine 101. The active-site Proton donor is the glutamate 122. N-linked (GlcNAc...) asparagine glycans are attached at residues asparagine 184, asparagine 216, asparagine 277, asparagine 320, asparagine 342, asparagine 374, and asparagine 405. A disulfide bond links cysteine 364 and cysteine 424. Serine 453 is lipidated: GPI-anchor amidated serine. A propeptide spans 454 to 476 (SSQTPNFFQSWPLLLLFLLSGLF) (removed in mature form).

The protein belongs to the glycosyl hydrolase 17 family. In terms of processing, contains two additional disulfide bonds.

The protein localises to the secreted. Its subcellular location is the cell wall. It is found in the cell membrane. The catalysed reaction is Hydrolysis of (1-&gt;3)-beta-D-glucosidic linkages in (1-&gt;3)-beta-D-glucans.. The protein is Glucan endo-1,3-beta-glucosidase 9 of Arabidopsis thaliana (Mouse-ear cress).